The sequence spans 90 residues: Small ribosomal subunit protein uS15c (90 aa).

This sequence belongs to the universal ribosomal protein uS15 family. Part of the 30S ribosomal subunit.

It localises to the plastid. The protein localises to the chloroplast. The protein is Small ribosomal subunit protein uS15c (rps15) of Piper cenocladum (Ant piper).